We begin with the raw amino-acid sequence, 222 residues long: MASGYGDASQKIDYVFKVVLIGDSAVGKTQILARFARNEFSLDSKATIGVEFQTRTLVIQHKSVKAQIWDTAGQERYRAVTSAYYRGAVGAMLVYDITKRQTFDHIPRWLEELRAHADRNIVIMLTGNKTDLEDQRAVPTEDAKEFAQKEGLFFLETSAMEATKLEDAFLTVLTEIFNIVNKKNLAADENQSNSNPASLTGKKILVPGPGQVIPGKKACCSS.

22 to 29 lines the GTP pocket; the sequence is GDSAVGKT. The Effector region signature appears at 44-52; it reads SKATIGVEF. GTP is bound by residues 70-74 and 128-131; these read DTAGQ and NKTD. S-geranylgeranyl cysteine attachment occurs at residues C219 and C220.

This sequence belongs to the small GTPase superfamily. Rab family.

The protein resides in the cell membrane. The chain is Ras-related protein Rab11C (RAB11C) from Nicotiana tabacum (Common tobacco).